Consider the following 145-residue polypeptide: Small ribosomal subunit protein eS19 (145 aa).

An N6-acetyllysine modification is found at lysine 23. Arginine 67 is subject to Omega-N-methylarginine. 2 positions are modified to N6-acetyllysine: lysine 111 and lysine 115. At lysine 143 the chain carries N6-succinyllysine.

The protein belongs to the eukaryotic ribosomal protein eS19 family. As to quaternary structure, component of the small ribosomal subunit. Part of the small subunit (SSU) processome, composed of more than 70 proteins and the RNA chaperone small nucleolar RNA (snoRNA) U3. Interacts with RPS19BP1; the interaction is direct and mediates the integration of RPS19 in state post-A1. Interacts with RPS19BP1.

It is found in the cytoplasm. The protein localises to the nucleus. Its subcellular location is the nucleolus. Functionally, component of the small ribosomal subunit. The ribosome is a large ribonucleoprotein complex responsible for the synthesis of proteins in the cell. Required for pre-rRNA processing and maturation of 40S ribosomal subunits. Part of the small subunit (SSU) processome, first precursor of the small eukaryotic ribosomal subunit. During the assembly of the SSU processome in the nucleolus, many ribosome biogenesis factors, an RNA chaperone and ribosomal proteins associate with the nascent pre-rRNA and work in concert to generate RNA folding, modifications, rearrangements and cleavage as well as targeted degradation of pre-ribosomal RNA by the RNA exosome. This Pongo abelii (Sumatran orangutan) protein is Small ribosomal subunit protein eS19 (RPS19).